We begin with the raw amino-acid sequence, 399 residues long: Elongation factor Tu (399 aa).

Residues 10–204 (KPHVNIGTIG…AVDASIPEPE (195 aa)) enclose the tr-type G domain. Residues 19–26 (GHVDHGKT) form a G1 region. 19–26 (GHVDHGKT) lines the GTP pocket. Mg(2+) is bound at residue Thr-26. Positions 60-64 (GITIN) are G2. A G3 region spans residues 81 to 84 (DCPG). Residues 81 to 85 (DCPGH) and 136 to 139 (NKCD) each bind GTP. Residues 136-139 (NKCD) are G4. A G5 region spans residues 174–176 (SGL).

Belongs to the TRAFAC class translation factor GTPase superfamily. Classic translation factor GTPase family. EF-Tu/EF-1A subfamily. As to quaternary structure, monomer.

Its subcellular location is the cytoplasm. It carries out the reaction GTP + H2O = GDP + phosphate + H(+). Its function is as follows. GTP hydrolase that promotes the GTP-dependent binding of aminoacyl-tRNA to the A-site of ribosomes during protein biosynthesis. The sequence is that of Elongation factor Tu from Prochlorococcus marinus (strain MIT 9215).